The chain runs to 192 residues: MIDFSRIQKELQDCERNQDSSGIRVCPKSDNLTRLTGTIPGPIGTPYEGGTFQIDITMPDGYPFEPPKMQFSTKVWHPNISSQSGAICLDILKDQWSPALTLKTALVSIQALLSAPEPKDPQDAVVAEQYMKNYQVFVSTARYWTETFAKKSSLEEKVKRLVEMGFGDAQVRSAIESSGGDENLALEKLCSA.

Positions 2 to 150 (IDFSRIQKEL…ARYWTETFAK (149 aa)) constitute a UBC core domain. Cys88 functions as the Glycyl thioester intermediate in the catalytic mechanism. The UBA domain maps to 153–192 (SLEEKVKRLVEMGFGDAQVRSAIESSGGDENLALEKLCSA).

Belongs to the ubiquitin-conjugating enzyme family. As to expression, expressed in seeds, pistils, siliques, hypocotyls and leaves.

It carries out the reaction S-ubiquitinyl-[E1 ubiquitin-activating enzyme]-L-cysteine + [E2 ubiquitin-conjugating enzyme]-L-cysteine = [E1 ubiquitin-activating enzyme]-L-cysteine + S-ubiquitinyl-[E2 ubiquitin-conjugating enzyme]-L-cysteine.. The protein operates within protein modification; protein ubiquitination. Its function is as follows. Accepts the ubiquitin from the E1 complex and catalyzes its covalent attachment to other proteins. The protein is Ubiquitin-conjugating enzyme E2 27 (UBC27) of Arabidopsis thaliana (Mouse-ear cress).